Consider the following 419-residue polypeptide: Phosphatidylcholine:ceramide cholinephosphotransferase 1 (419 aa).

In terms of domain architecture, SAM spans tryptophan 13 to glutamate 76. Serine 14 carries the phosphoserine modification. Transmembrane regions (helical) follow at residues leucine 142–valine 162, phenylalanine 190–leucine 210, phenylalanine 221–leucine 241, methionine 282–isoleucine 302, and leucine 310–leucine 330. The active site involves histidine 291. The Cytoplasmic portion of the chain corresponds to alanine 331 to threonine 419. Catalysis depends on residues histidine 334 and aspartate 338.

Belongs to the sphingomyelin synthase family.

Its subcellular location is the golgi apparatus membrane. The enzyme catalyses an N-acylsphing-4-enine + a 1,2-diacyl-sn-glycero-3-phosphocholine = a sphingomyelin + a 1,2-diacyl-sn-glycerol. It catalyses the reaction 1-(9Z-octadecenoyl)-2-acyl-sn-3-glycerol + a sphingomyelin = a 1-(9Z-octadecenoyl)-2-acyl-sn-glycero-3-phosphocholine + an N-acylsphing-4-enine. The catalysed reaction is N-hexadecanoylsphinganine + a 1,2-diacyl-sn-glycero-3-phosphocholine = N-hexadecanoyl-sphinganine-1-phosphocholine + a 1,2-diacyl-sn-glycerol. It carries out the reaction N-hexadecanoyl-(4R)-hydroxysphinganine + a 1,2-diacyl-sn-glycero-3-phosphocholine = N-hexadecanoyl-(4R)-hydroxysphinganine-phosphocholine + a 1,2-diacyl-sn-glycerol. The enzyme catalyses an N-acylsphing-4-enine + a 1,2-diacyl-sn-glycero-3-phosphoethanolamine = an N-acylsphing-4-enine 1-phosphoethanolamine + a 1,2-diacyl-sn-glycerol. Its pathway is sphingolipid metabolism. Its function is as follows. Major sphingomyelin synthase at the Golgi apparatus. Catalyzes the reversible transfer of phosphocholine moiety in sphingomyelin biosynthesis: in the forward reaction transfers phosphocholine head group of phosphatidylcholine (PC) on to ceramide (CER) to form ceramide phosphocholine (sphingomyelin, SM) and diacylglycerol (DAG) as by-product, and in the reverse reaction transfers phosphocholine from SM to DAG to form PC and CER. The direction of the reaction depends on the levels of CER and DAG in Golgi membranes. Converts the newly synthesized CER, that is transported from the endoplasmic reticulum to the trans-Golgi by the Cer transport protein (CERT), to SM. Can form a heteromeric complex with glucosylceramide synthase (GCS) increasing SMS activity and reducing glucosylceramide synthesis, a critical mechanism that controls the metabolic fate of CER in the Golgi. Does not use free phosphorylcholine or CDP-choline as donor. Can also transfer phosphoethanolamine head group of phosphatidylethanolamine (PE) on to CER to form ceramide phosphoethanolamine (CPE). Regulates receptor-mediated signal transduction via mitogenic DAG and proapoptotic CER, as well as via SM, a structural component of membrane rafts that serve as platforms for signal transduction and protein sorting. Plays a role in secretory transport via regulation of DAG pool at the Golgi apparatus and its downstream effects on PRKD1. This chain is Phosphatidylcholine:ceramide cholinephosphotransferase 1 (Sgms1), found in Rattus norvegicus (Rat).